A 397-amino-acid chain; its full sequence is Enoyl-[acyl-carrier-protein] reductase [NADH] (397 aa).

NAD(+) contacts are provided by residues 48 to 53, 74 to 75, 111 to 112, and 139 to 140; these read GASTGY, FE, DA, and VA. Y225 is a binding site for substrate. Y235 acts as the Proton donor in catalysis. Residues K244 and 273-275 each bind NAD(+); that span reads VVT.

This sequence belongs to the TER reductase family. Monomer.

The enzyme catalyses a 2,3-saturated acyl-[ACP] + NAD(+) = a (2E)-enoyl-[ACP] + NADH + H(+). Its pathway is lipid metabolism; fatty acid biosynthesis. Functionally, involved in the final reduction of the elongation cycle of fatty acid synthesis (FAS II). Catalyzes the reduction of a carbon-carbon double bond in an enoyl moiety that is covalently linked to an acyl carrier protein (ACP). In Burkholderia pseudomallei (strain 668), this protein is Enoyl-[acyl-carrier-protein] reductase [NADH].